The primary structure comprises 518 residues: Probable lysine--tRNA ligase, cytoplasmic (518 aa).

The protein belongs to the class-II aminoacyl-tRNA synthetase family. Homodimer.

The protein resides in the cytoplasm. It carries out the reaction tRNA(Lys) + L-lysine + ATP = L-lysyl-tRNA(Lys) + AMP + diphosphate. In Enterocytozoon bieneusi (strain H348) (Microsporidian parasite), this protein is Probable lysine--tRNA ligase, cytoplasmic.